A 522-amino-acid polypeptide reads, in one-letter code: UPF0288 protein MTH_1865 (522 aa).

The protein belongs to the UPF0288 family.

The chain is UPF0288 protein MTH_1865 from Methanothermobacter thermautotrophicus (strain ATCC 29096 / DSM 1053 / JCM 10044 / NBRC 100330 / Delta H) (Methanobacterium thermoautotrophicum).